The chain runs to 160 residues: Large ribosomal subunit protein eL21 (160 aa).

Composition is skewed to basic and acidic residues over residues 112–123 (NDQKKKEAKEKG) and 136–145 (REAHFVRTNG). The interval 112–145 (NDQKKKEAKEKGTWVQLKRQPAPPREAHFVRTNG) is disordered.

The protein belongs to the eukaryotic ribosomal protein eL21 family. In terms of assembly, component of the large ribosomal subunit.

It is found in the cytoplasm. It localises to the cytosol. The protein resides in the endoplasmic reticulum. Functionally, component of the large ribosomal subunit. The ribosome is a large ribonucleoprotein complex responsible for the synthesis of proteins in the cell. The chain is Large ribosomal subunit protein eL21 from Mus musculus (Mouse).